A 266-amino-acid polypeptide reads, in one-letter code: Putative hydro-lyase Jann_2570 (266 aa).

This sequence belongs to the D-glutamate cyclase family.

This is Putative hydro-lyase Jann_2570 from Jannaschia sp. (strain CCS1).